The primary structure comprises 122 residues: Large ribosomal subunit protein uL14 (122 aa).

Belongs to the universal ribosomal protein uL14 family. Part of the 50S ribosomal subunit. Forms a cluster with proteins L3 and L19. In the 70S ribosome, L14 and L19 interact and together make contacts with the 16S rRNA in bridges B5 and B8.

Binds to 23S rRNA. Forms part of two intersubunit bridges in the 70S ribosome. This chain is Large ribosomal subunit protein uL14, found in Solibacter usitatus (strain Ellin6076).